The primary structure comprises 423 residues: Gamma-glutamyl phosphate reductase (423 aa).

This sequence belongs to the gamma-glutamyl phosphate reductase family.

It is found in the cytoplasm. It catalyses the reaction L-glutamate 5-semialdehyde + phosphate + NADP(+) = L-glutamyl 5-phosphate + NADPH + H(+). Its pathway is amino-acid biosynthesis; L-proline biosynthesis; L-glutamate 5-semialdehyde from L-glutamate: step 2/2. In terms of biological role, catalyzes the NADPH-dependent reduction of L-glutamate 5-phosphate into L-glutamate 5-semialdehyde and phosphate. The product spontaneously undergoes cyclization to form 1-pyrroline-5-carboxylate. This chain is Gamma-glutamyl phosphate reductase, found in Burkholderia orbicola (strain AU 1054).